Here is a 205-residue protein sequence, read N- to C-terminus: UPF0301 protein Bind_0718 (205 aa).

It belongs to the UPF0301 (AlgH) family.

The protein is UPF0301 protein Bind_0718 of Beijerinckia indica subsp. indica (strain ATCC 9039 / DSM 1715 / NCIMB 8712).